The following is a 202-amino-acid chain: ATP-dependent Clp protease proteolytic subunit (202 aa).

Ser-101 acts as the Nucleophile in catalysis. His-126 is an active-site residue.

The protein belongs to the peptidase S14 family. Component of the chloroplastic Clp protease core complex.

It localises to the plastid. The protein localises to the chloroplast stroma. It carries out the reaction Hydrolysis of proteins to small peptides in the presence of ATP and magnesium. alpha-casein is the usual test substrate. In the absence of ATP, only oligopeptides shorter than five residues are hydrolyzed (such as succinyl-Leu-Tyr-|-NHMec, and Leu-Tyr-Leu-|-Tyr-Trp, in which cleavage of the -Tyr-|-Leu- and -Tyr-|-Trp bonds also occurs).. Its function is as follows. Cleaves peptides in various proteins in a process that requires ATP hydrolysis. Has a chymotrypsin-like activity. Plays a major role in the degradation of misfolded proteins. The polypeptide is ATP-dependent Clp protease proteolytic subunit (Calycanthus floridus var. glaucus (Eastern sweetshrub)).